Consider the following 201-residue polypeptide: Holliday junction branch migration complex subunit RuvA (201 aa).

The segment at 1–64 is domain I; sequence MIGRLRGELV…EDAHVLYGFA (64 aa). The segment at 65–143 is domain II; sequence SESERALFRS…SLPAAVTLTG (79 aa). Residues 144-153 are flexible linker; it reads GKPAAAAARA. The interval 153–201 is domain III; sequence APDPVSDAVSALVSLGYKPQEASRLISAVEGEAERSEDLIRLALKATLK.

This sequence belongs to the RuvA family. Homotetramer. Forms an RuvA(8)-RuvB(12)-Holliday junction (HJ) complex. HJ DNA is sandwiched between 2 RuvA tetramers; dsDNA enters through RuvA and exits via RuvB. An RuvB hexamer assembles on each DNA strand where it exits the tetramer. Each RuvB hexamer is contacted by two RuvA subunits (via domain III) on 2 adjacent RuvB subunits; this complex drives branch migration. In the full resolvosome a probable DNA-RuvA(4)-RuvB(12)-RuvC(2) complex forms which resolves the HJ.

It localises to the cytoplasm. Functionally, the RuvA-RuvB-RuvC complex processes Holliday junction (HJ) DNA during genetic recombination and DNA repair, while the RuvA-RuvB complex plays an important role in the rescue of blocked DNA replication forks via replication fork reversal (RFR). RuvA specifically binds to HJ cruciform DNA, conferring on it an open structure. The RuvB hexamer acts as an ATP-dependent pump, pulling dsDNA into and through the RuvAB complex. HJ branch migration allows RuvC to scan DNA until it finds its consensus sequence, where it cleaves and resolves the cruciform DNA. The sequence is that of Holliday junction branch migration complex subunit RuvA from Thioalkalivibrio sulfidiphilus (strain HL-EbGR7).